A 190-amino-acid polypeptide reads, in one-letter code: dTTP/UTP pyrophosphatase (190 aa).

The Proton acceptor role is filled by Asp70.

This sequence belongs to the Maf family. YhdE subfamily. A divalent metal cation serves as cofactor.

The protein resides in the cytoplasm. The enzyme catalyses dTTP + H2O = dTMP + diphosphate + H(+). It carries out the reaction UTP + H2O = UMP + diphosphate + H(+). Nucleoside triphosphate pyrophosphatase that hydrolyzes dTTP and UTP. May have a dual role in cell division arrest and in preventing the incorporation of modified nucleotides into cellular nucleic acids. In Paramagnetospirillum magneticum (strain ATCC 700264 / AMB-1) (Magnetospirillum magneticum), this protein is dTTP/UTP pyrophosphatase.